Consider the following 525-residue polypeptide: Ubiquitin carboxyl-terminal hydrolase 22 (525 aa).

A UBP-type zinc finger spans residues 21–138; it reads PGCSHLGSFK…KEEQRKAWKM (118 aa). Zn(2+) is bound by residues Cys-23, His-25, Cys-63, Cys-66, Cys-76, Cys-79, Cys-84, His-89, His-93, His-99, Cys-112, and Cys-115. Lys-129 bears the N6-acetyllysine mark. Thr-147 is subject to Phosphothreonine; by CDK1. A USP domain is found at 176 to 520; it reads RGLINLGNTC…EGYLLFYHKQ (345 aa). Cys-185 functions as the Nucleophile in the catalytic mechanism. At Ser-237 the chain carries Phosphoserine; by CDK1. The Proton acceptor role is filled by His-479.

It belongs to the peptidase C19 family. UBP8 subfamily. Component of some SAGA transcription coactivator-HAT complexes, at least composed of ATXN7, ATXN7L3, ENY2, GCN5L2, SUPT3H, TAF10, TRRAP and USP22. Within the SAGA complex, ATXN7L3, ENY2 and USP22 form a subcomplex required for histone deubiquitination. Interacts directly with ATXN7L3; leading to its recruitment to the SAGA complex. Interacts with ATXN7L3 and weakly with ATXN7L3B. Interacts with MED1. In terms of processing, phosphorylated in G2/M phase, but not in G1 phase by CDK1. Ubiquitinated and subsequently degraded in a CDC20-dependent manner. In terms of tissue distribution, moderately expressed in various tissues including heart and skeletal muscle, and weakly expressed in lung and liver.

It is found in the nucleus. The protein resides in the cytoplasm. It carries out the reaction Thiol-dependent hydrolysis of ester, thioester, amide, peptide and isopeptide bonds formed by the C-terminal Gly of ubiquitin (a 76-residue protein attached to proteins as an intracellular targeting signal).. Functionally, deubiquitinase that plays a role in several cellular processes including transcriptional regulation, cell cycle progression or innate immunity. As part of the transcription regulatory histone acetylation (HAT) complex SAGA, catalyzes the deubiquitination of both histones H2A and H2B, thereby acting as a transcriptional coactivator. Recruited to specific gene promoters by activators such as MYC, where it is required for transcription. Facilitates cell-cycle progression by stabilizing CCNB1 and antagonizing its proteasome-mediated degradation in a cell cycle-specific manner. Modulates cell cycle progression and apoptosis also by antagonizing TP53 transcriptional activation through deacetylase SIRT1 stabilization. Plays multiple roles in immunity and inflammation. Participates in antiviral response by deubiquitinating the importin KPNA2, leading to IRF3 nuclear translocation and subsequent type I interferon production. Acts as a central regulator of type III IFN signaling by negatively regulating STING1 activation and ubiquitination. Inhibits NLRP3 inflammasome activation by promoting NLRP3 degradation through ATG5-dependent autophagy. Deubiquitinates CD274 to induce its stabilization and thereby participates in maintenance of immune tolerance to self. Controls necroptotic cell death by regulating RIPK3 phosphorylation and ubiquitination. During bacterial infection, promotes pro-inflammatory response by targeting TRAF6 and removing its 'Lys-48'-linked polyubiquitination. This is Ubiquitin carboxyl-terminal hydrolase 22 (USP22) from Homo sapiens (Human).